We begin with the raw amino-acid sequence, 343 residues long: N-acetyl-gamma-glutamyl-phosphate reductase (343 aa).

Cysteine 147 is an active-site residue.

It belongs to the NAGSA dehydrogenase family. Type 1 subfamily.

Its subcellular location is the cytoplasm. The enzyme catalyses N-acetyl-L-glutamate 5-semialdehyde + phosphate + NADP(+) = N-acetyl-L-glutamyl 5-phosphate + NADPH + H(+). The protein operates within amino-acid biosynthesis; L-arginine biosynthesis; N(2)-acetyl-L-ornithine from L-glutamate: step 3/4. Functionally, catalyzes the NADPH-dependent reduction of N-acetyl-5-glutamyl phosphate to yield N-acetyl-L-glutamate 5-semialdehyde. The polypeptide is N-acetyl-gamma-glutamyl-phosphate reductase (Listeria welshimeri serovar 6b (strain ATCC 35897 / DSM 20650 / CCUG 15529 / CIP 8149 / NCTC 11857 / SLCC 5334 / V8)).